Here is a 338-residue protein sequence, read N- to C-terminus: Biotin synthase (338 aa).

A Radical SAM core domain is found at 50 to 277; that stretch reads QAVQLSTLMS…KSYVRLSAGR (228 aa). Residues C65, C69, and C72 each coordinate [4Fe-4S] cluster. Positions 109, 140, 200, and 272 each coordinate [2Fe-2S] cluster.

Belongs to the radical SAM superfamily. Biotin synthase family. In terms of assembly, homodimer. The cofactor is [4Fe-4S] cluster. Requires [2Fe-2S] cluster as cofactor.

The catalysed reaction is (4R,5S)-dethiobiotin + (sulfur carrier)-SH + 2 reduced [2Fe-2S]-[ferredoxin] + 2 S-adenosyl-L-methionine = (sulfur carrier)-H + biotin + 2 5'-deoxyadenosine + 2 L-methionine + 2 oxidized [2Fe-2S]-[ferredoxin]. Its pathway is cofactor biosynthesis; biotin biosynthesis; biotin from 7,8-diaminononanoate: step 2/2. Catalyzes the conversion of dethiobiotin (DTB) to biotin by the insertion of a sulfur atom into dethiobiotin via a radical-based mechanism. The protein is Biotin synthase of Actinobacillus succinogenes (strain ATCC 55618 / DSM 22257 / CCUG 43843 / 130Z).